Reading from the N-terminus, the 150-residue chain is UPF0756 membrane protein PMI1560 (150 aa).

The next 4 membrane-spanning stretches (helical) occupy residues 16–36, 51–71, 82–102, and 123–143; these read GLGI…LLVI, YGMT…IATG, FLNW…WLGA, and VIGV…AGIL.

It belongs to the UPF0756 family.

The protein localises to the cell membrane. This chain is UPF0756 membrane protein PMI1560, found in Proteus mirabilis (strain HI4320).